Consider the following 429-residue polypeptide: Serine hydroxymethyltransferase (429 aa).

Residues Leu125 and 129–131 (GHL) contribute to the (6S)-5,6,7,8-tetrahydrofolate site. The residue at position 234 (Lys234) is an N6-(pyridoxal phosphate)lysine.

The protein belongs to the SHMT family. Homodimer. The cofactor is pyridoxal 5'-phosphate.

The protein localises to the cytoplasm. The enzyme catalyses (6R)-5,10-methylene-5,6,7,8-tetrahydrofolate + glycine + H2O = (6S)-5,6,7,8-tetrahydrofolate + L-serine. The protein operates within one-carbon metabolism; tetrahydrofolate interconversion. It participates in amino-acid biosynthesis; glycine biosynthesis; glycine from L-serine: step 1/1. Its function is as follows. Catalyzes the reversible interconversion of serine and glycine with tetrahydrofolate (THF) serving as the one-carbon carrier. This reaction serves as the major source of one-carbon groups required for the biosynthesis of purines, thymidylate, methionine, and other important biomolecules. Also exhibits THF-independent aldolase activity toward beta-hydroxyamino acids, producing glycine and aldehydes, via a retro-aldol mechanism. This chain is Serine hydroxymethyltransferase, found in Allorhizobium ampelinum (strain ATCC BAA-846 / DSM 112012 / S4) (Agrobacterium vitis (strain S4)).